Here is an 86-residue protein sequence, read N- to C-terminus: UPF0297 protein SAHV_1604 (86 aa).

The protein belongs to the UPF0297 family.

This Staphylococcus aureus (strain Mu3 / ATCC 700698) protein is UPF0297 protein SAHV_1604.